A 755-amino-acid polypeptide reads, in one-letter code: Kojibiose phosphorylase (755 aa).

Residue 333 to 334 (WD) coordinates substrate. Glu473 acts as the Proton donor in catalysis. 573–574 (KQ) lines the substrate pocket.

This sequence belongs to the glycosyl hydrolase 65 family.

The catalysed reaction is kojibiose + phosphate = beta-D-glucose 1-phosphate + D-glucose. In terms of biological role, in vitro catalyzes the phosphorolysis of D-kojibiose into beta-D-glucose 1-phosphate and D-glucose. No other disaccharides tested substitute for D-kojibiose. In the reverse direction disaccharides can be formed from beta-D-glucose 1-phosphate plus D-glucose, L-sorbose, D-sorbitol, L-iditol or 1,5-anhydro-D-glucitol, but with low efficiency. The beta-D-glucose 1-phosphate product is the substrate for YcjU (AC P77366), the next apparent enzyme in the putative biochemical pathway encoded in this locus (yjcM to ycjW). This is Kojibiose phosphorylase (ycjT) from Escherichia coli (strain K12).